The following is a 490-amino-acid chain: Protein nucleotidyltransferase YdiU (490 aa).

Residues Gly-94, Gly-96, Arg-97, Lys-117, Asp-129, Gly-130, Arg-180, and Arg-187 each contribute to the ATP site. Asp-256 (proton acceptor) is an active-site residue. Residues Asn-257 and Asp-266 each coordinate Mg(2+). Asp-266 serves as a coordination point for ATP.

It belongs to the SELO family. Requires Mg(2+) as cofactor. Mn(2+) serves as cofactor.

The enzyme catalyses L-seryl-[protein] + ATP = 3-O-(5'-adenylyl)-L-seryl-[protein] + diphosphate. It catalyses the reaction L-threonyl-[protein] + ATP = 3-O-(5'-adenylyl)-L-threonyl-[protein] + diphosphate. The catalysed reaction is L-tyrosyl-[protein] + ATP = O-(5'-adenylyl)-L-tyrosyl-[protein] + diphosphate. It carries out the reaction L-histidyl-[protein] + UTP = N(tele)-(5'-uridylyl)-L-histidyl-[protein] + diphosphate. The enzyme catalyses L-seryl-[protein] + UTP = O-(5'-uridylyl)-L-seryl-[protein] + diphosphate. It catalyses the reaction L-tyrosyl-[protein] + UTP = O-(5'-uridylyl)-L-tyrosyl-[protein] + diphosphate. Its function is as follows. Nucleotidyltransferase involved in the post-translational modification of proteins. It can catalyze the addition of adenosine monophosphate (AMP) or uridine monophosphate (UMP) to a protein, resulting in modifications known as AMPylation and UMPylation. The sequence is that of Protein nucleotidyltransferase YdiU from Clostridium perfringens (strain 13 / Type A).